Here is a 146-residue protein sequence, read N- to C-terminus: MLEEFRLYRNERTQRLMLTKTEFAEVKYKTVELPVGDSVRTGQEVFLNGAWYKVETVRGKKAKLRPLENGNWKLIATGIEAVKQYLNVLTETEVAVEENRLIVKMKRPPMVAVDKGTSYTFNEAFMLLYNYCMENKIDLILEFINS.

This is an uncharacterized protein from Acidianus filamentous virus 1 (isolate United States/Yellowstone) (AFV-1).